Reading from the N-terminus, the 368-residue chain is UV excision repair protein rhp23 (368 aa).

One can recognise a Ubiquitin-like domain in the interval 1-77; sequence MNLTFKNLQQ…IVCMVSRPKT (77 aa). Composition is skewed to low complexity over residues 76–88 and 103–124; these read KTST…AASP and APSS…AAPS. Positions 76-134 are disordered; that stretch reads KTSTSTPKSAASPAPNPPASVPEKKVEAPSSTVAESTSTTQTVAAAAPSNPDTTATSEA. Phosphoserine occurs at positions 84 and 87. UBA domains follow at residues 135 to 185 and 320 to 360; these read PIDA…LLTG and QEES…LFEH. A Phosphoserine modification is found at serine 364.

Its subcellular location is the nucleus. Functionally, involved in postreplication repair of UV-damaged DNA. Postreplication repair functions in gap-filling of a daughter strand on replication of damaged DNA. Its function is as follows. Protects ubiquitin chains against dissambly by deubiquitinating enzymes thereby promoting protein degradation. This is UV excision repair protein rhp23 (rhp23) from Schizosaccharomyces pombe (strain 972 / ATCC 24843) (Fission yeast).